The sequence spans 287 residues: Melatonin receptor type 1B-A (287 aa).

At 1–28 the chain is on the extracellular side; that stretch reads MPENVSLIRNRTEVGQGRAWGSGAGARP. N-linked (GlcNAc...) asparagine glycans are attached at residues N4 and N10. The helical transmembrane segment at 29–49 threads the bilayer; the sequence is AWVVMVLAGVLIFTSVVDVLG. At 50 to 69 the chain is on the cytoplasmic side; sequence NVLVIISVLRNRKLRNAGNA. Residues 70-90 form a helical membrane-spanning segment; it reads FVVSLAFADLLVVCYPYPLVL. The Extracellular segment spans residues 91 to 107; sequence HAMLHAGWLPGEMECKV. A disulfide bridge links C105 with C182. The helical transmembrane segment at 108-128 threads the bilayer; it reads SGFLMGASVIGSIFNITAIAI. The Cytoplasmic segment spans residues 129 to 149; it reads NRYCFICQANTYEKIYGRAGT. Residues 150-170 traverse the membrane as a helical segment; the sequence is LVLLTLVWVLTAIAILPNLSL. Topologically, residues 171–192 are extracellular; it reads GSLTYDPRVYSCTFSQTTSAGY. A helical membrane pass occupies residues 193–213; that stretch reads TIAVVTVHFLLPIAVVTFCYL. Residues 214-245 are Cytoplasmic-facing; that stretch reads RIWVLVLRVRRRVTTDVRPRLRPSELRHFLTM. A helical membrane pass occupies residues 246–266; sequence FVVFVLFAVCWAPLNLIGLAV. Topologically, residues 267–275 are extracellular; that stretch reads AVDPPRVGP. Residues 276-287 traverse the membrane as a helical segment; that stretch reads LVPDWLFVMSYF.

Belongs to the G-protein coupled receptor 1 family.

It is found in the cell membrane. Functionally, high affinity receptor for melatonin. The activity of this receptor is mediated by pertussis toxin sensitive G proteins that inhibits adenylate cyclase activity. The chain is Melatonin receptor type 1B-A (mtnr1ba) from Danio rerio (Zebrafish).